Consider the following 777-residue polypeptide: MKMNVTATVSHALGHWPRILPALGIQVLKNRHQPCPVCGGSDRFRFDDREGRGTWYCNQCGAGDGLKLVEKVFGVSPSDAAAKVAAVTGSLPPADPAVTTAAVDETDAARKNAAALAQTLMAKTRTGTGNAYLTRKGFPGRECRMLTGTHRAGGVSWRAGDLVVPLYDDSGELVNLQLISADGRKRTLKGGQVRGTCHTLEGQNQAGKRLWIAEGYATALTVHHLTGETVMVALSSVNLLSLASLARQKHPACQIVLAADRDLSGDGQKKAAAAADACEGVVALPPVFGDWNDAFTQYGGEATRKAIYDAIRPPAESPFDTMSEAEFSAMSTSEKAMRIYEHYGEALAVDANGQLLSRYENGVWKVLPPQDFARDVAGLFQRLRAPFSSGKVASVVDTLKLIIPQQEAPSRRLIGFRNGVLDTQNGTFHPHSPSHWMRTLCDVDFTPPVDGETLETHAPAFWRWLDRAAGGRAEKRDVILAALFMVLANRYDWQLFLEVTGPGGSGKSIMAEIATLLAGEDNATSATIETLESPRERAALTGFSLIRLPDQEKWSGDGAGLKAITGGDAVSVDPKYRDAYSTHIPAVILAVNNNPMRFTDRSGGVSRRRVIIHFPEQIAPQERDPQLKDKITRELAVIVRHLMQKFSDPMLARSLLQSQQNSDEALNIKRDADPTFDFIGYLETLPQTSGMYMGNASIIPRNYRKYLYHAYLAYMEANGYRNVLSLKMFGLGLPVMLKEYGLNYEKRHTKQGIQTNLTLKEESYGDWLPKCDDPTTA.

A CHC2-type zinc finger spans residues 35-60 (CPVCGGSDRFRFDDREGRGTWYCNQC). One can recognise a Toprim domain in the interval 208–296 (KRLWIAEGYA…VFGDWNDAFT (89 aa)). One can recognise an SF3 helicase domain in the interval 474–627 (EKRDVILAAL…IAPQERDPQL (154 aa)). Residue 501–508 (GPGGSGKS) coordinates ATP.

In terms of assembly, homohexamer.

The enzyme catalyses ATP + H2O = ADP + phosphate + H(+). Functionally, this protein acts as a DNA primase generating di- to pentaribonucleotides; the predominant product being the dimer pppApG. It complexes specifically to the P4 origin of replication (ori) and its cis replication region (crr). It also acts as a DNA helicase. The polypeptide is Putative P4-specific DNA primase (Alpha) (Escherichia coli (Bacteriophage P4)).